The following is a 472-amino-acid chain: Argininosuccinate lyase (472 aa).

Belongs to the lyase 1 family. Argininosuccinate lyase subfamily.

Its subcellular location is the cytoplasm. The enzyme catalyses 2-(N(omega)-L-arginino)succinate = fumarate + L-arginine. Its pathway is amino-acid biosynthesis; L-arginine biosynthesis; L-arginine from L-ornithine and carbamoyl phosphate: step 3/3. This is Argininosuccinate lyase from Synechococcus sp. (strain CC9311).